Reading from the N-terminus, the 628-residue chain is LRR receptor kinase SERK2 (628 aa).

Residues 1–31 (MAEARLLRRRRLCLAVPFVWVVAVAVSRVGA) form the signal peptide. 4 LRR repeats span residues 97-121 (LKNLQYLELYSNNISGTIPNELGNL), 123-144 (NLVSLDLYLNNFTGFIPETLGQ), 145-169 (LYKLRFLRLNNNSLSGSIPKSLTNI), and 170-194 (TTLQVLDLSNNNLSGEVPSTGSFSL). N-linked (GlcNAc...) asparagine glycans are attached at residues asparagine 109, asparagine 120, asparagine 133, asparagine 155, asparagine 168, and asparagine 181. The helical transmembrane segment at 243–263 (AIAGGVAAAAALLFAVPAIGF) threads the bilayer. At threonine 303 the chain carries Phosphothreonine. Residues 306-593 (FSNKNILGRG…GLAERWEEWQ (288 aa)) form the Protein kinase domain. ATP is bound at residue 312–320 (LGRGGFGKV). Position 329 is a phosphoserine (serine 329). An ATP-binding site is contributed by lysine 334. Residue threonine 350 is modified to Phosphothreonine. Serine 356 and serine 387 each carry phosphoserine. The active-site Proton acceptor is the aspartate 433. Phosphothreonine occurs at positions 463, 466, and 472. Serine 615 carries the post-translational modification Phosphoserine. Position 616 is a phosphothreonine (threonine 616). At serine 625 the chain carries Phosphoserine.

It belongs to the protein kinase superfamily. Ser/Thr protein kinase family. As to quaternary structure, interacts with BRI1. Interacts with XA21, XA26/XA3 and FLS2. In terms of processing, autophosphorylated on serine and threonine residues. In terms of tissue distribution, expressed in flag leaves. Expressed in roots, shoot apex, leaf blades, leaf sheaths, panicles and flowers. Expressed leaves, stems, sheaths and flowers.

Its subcellular location is the cell membrane. It catalyses the reaction L-seryl-[protein] + ATP = O-phospho-L-seryl-[protein] + ADP + H(+). It carries out the reaction L-threonyl-[protein] + ATP = O-phospho-L-threonyl-[protein] + ADP + H(+). Functionally, LRR receptor kinase involved in positive regulation of somatic embryogenesis and defense response against the rice blast fungus pathogen Magnaporthe oryzae. Involved in the positive regulation of receptor kinase-mediated immunity. Required for immunity mediated by the LRR receptor kinases XA21 and XA26/XA3 which recognize effectors from the bacterial pathogen Xanthomonas oryzae pv. oryzae (Xoo). Required for the immune response mediated by the LRR receptor kinase FLS2 which recognizes specifically the bacterial flagellin (flg22) effector. Kinase activity and direct interaction with the immune receptors is critical for their function. Involved in the regulation of plant growth through the brassinosteroid (BR) signaling pathway. The sequence is that of LRR receptor kinase SERK2 from Oryza sativa subsp. japonica (Rice).